A 355-amino-acid chain; its full sequence is GPN-loop GTPase 1 (355 aa).

The tract at residues 1–30 (MAEKAENLPSSSAEASEEPSPQTGPNVNQK) is disordered. The segment covering 9 to 21 (PSSSAEASEEPSP) has biased composition (low complexity). Residue 40 to 45 (GSGKTT) coordinates GTP. The short motif at 97–99 (GPN) is the Gly-Pro-Asn (GPN)-loop; involved in dimer interface element. 200–203 (NKAD) lines the GTP pocket. A coiled-coil region spans residues 286–311 (EKVLAEKKLLDEEERKKRDEETLKGK).

It belongs to the GPN-loop GTPase family. As to quaternary structure, heterodimer with GPN3. Binds to RNA polymerase II (RNAPII).

It is found in the cytoplasm. The protein localises to the nucleus. Functionally, small GTPase required for proper nuclear import of RNA polymerase II (RNAPII). May act at an RNAP assembly step prior to nuclear import. The sequence is that of GPN-loop GTPase 1 from Caenorhabditis elegans.